The following is a 109-amino-acid chain: MMTDTQLFEYLYFSPKTIKNKLVNHFEILAKNNILSEFYPKQYKLQKGVFKGCRVLCTAPNARLMNKIPYFTMEFIDGPFKGLITQSLMAYDSEPFLIKEQSWINLFSN.

This is an uncharacterized protein from Enterobacteria phage T4 (Bacteriophage T4).